A 136-amino-acid chain; its full sequence is Protein NrdI (136 aa).

It belongs to the NrdI family.

In terms of biological role, probably involved in ribonucleotide reductase function. The protein is Protein NrdI of Erwinia tasmaniensis (strain DSM 17950 / CFBP 7177 / CIP 109463 / NCPPB 4357 / Et1/99).